A 252-amino-acid chain; its full sequence is Phosphoglycolate phosphatase (252 aa).

The active-site Nucleophile is Asp-13. Residues Asp-13, Asp-15, and Asp-192 each coordinate Mg(2+).

It belongs to the HAD-like hydrolase superfamily. CbbY/CbbZ/Gph/YieH family. In terms of assembly, monomer. The cofactor is Mg(2+). Requires chloride as cofactor.

The enzyme catalyses 2-phosphoglycolate + H2O = glycolate + phosphate. It functions in the pathway organic acid metabolism; glycolate biosynthesis; glycolate from 2-phosphoglycolate: step 1/1. In terms of biological role, specifically catalyzes the dephosphorylation of 2-phosphoglycolate. Is involved in the dissimilation of the intracellular 2-phosphoglycolate formed during the DNA repair of 3'-phosphoglycolate ends, a major class of DNA lesions induced by oxidative stress. This Salmonella typhi protein is Phosphoglycolate phosphatase.